Here is an 87-residue protein sequence, read N- to C-terminus: Small ribosomal subunit protein bS16 (87 aa).

This sequence belongs to the bacterial ribosomal protein bS16 family.

The protein is Small ribosomal subunit protein bS16 of Nitrosospira multiformis (strain ATCC 25196 / NCIMB 11849 / C 71).